The sequence spans 102 residues: Small ribosomal subunit protein uS10 (102 aa).

The protein belongs to the universal ribosomal protein uS10 family. In terms of assembly, part of the 30S ribosomal subunit.

Involved in the binding of tRNA to the ribosomes. The chain is Small ribosomal subunit protein uS10 from Mycoplasma mobile (strain ATCC 43663 / 163K / NCTC 11711) (Mesomycoplasma mobile).